We begin with the raw amino-acid sequence, 426 residues long: Adenylosuccinate synthetase (426 aa).

GTP-binding positions include 18–24 (GDEGKGK) and 46–48 (GHT). Asp-19 serves as the catalytic Proton acceptor. 2 residues coordinate Mg(2+): Asp-19 and Gly-46. IMP contacts are provided by residues 19 to 22 (DEGK), 44 to 47 (NAGH), Thr-136, Arg-150, Gln-222, Thr-237, and Arg-301. The Proton donor role is filled by His-47. 297–303 (VTTKRKR) provides a ligand contact to substrate. GTP contacts are provided by residues Arg-303, 329 to 331 (KID), and 413 to 415 (GTG).

This sequence belongs to the adenylosuccinate synthetase family. In terms of assembly, homodimer. It depends on Mg(2+) as a cofactor.

It localises to the cytoplasm. It catalyses the reaction IMP + L-aspartate + GTP = N(6)-(1,2-dicarboxyethyl)-AMP + GDP + phosphate + 2 H(+). It participates in purine metabolism; AMP biosynthesis via de novo pathway; AMP from IMP: step 1/2. Functionally, plays an important role in the de novo pathway and in the salvage pathway of purine nucleotide biosynthesis. Catalyzes the first committed step in the biosynthesis of AMP from IMP. This Schistosoma mansoni (Blood fluke) protein is Adenylosuccinate synthetase.